Here is a 149-residue protein sequence, read N- to C-terminus: Large ribosomal subunit protein bL9 (149 aa).

It belongs to the bacterial ribosomal protein bL9 family.

Its function is as follows. Binds to the 23S rRNA. The chain is Large ribosomal subunit protein bL9 from Amoebophilus asiaticus (strain 5a2).